A 559-amino-acid polypeptide reads, in one-letter code: MNESFAQLFEESLKEIKTRPGSIIRGTIVSIEKDIVLVDAGLKSESAIPVEQFKNAQGLLDVKVGDQIDVALDAIEDGFGETLLSREKAKRHEAWLILEQAHEKSETVIGIINGKVKGGFTVELNEIRAFLPGSLVDVRPVRDTIHLEGKELEFKVIKLDQKRNNVVVSRRAVIESENSAERDQLLESLQEGIEIKGIVKNLTDYGAFVDLGGVDGLLHITDMAWKRVKHPSEIVNVGDEINVKILKFDKERTRVSLGLKQLGEDPWIAISNRYPEGIKLSGRVTNLTDYGCFVEIEEGVEGLVHVSEMDWTNKNIHPSKVVAVNNIVDVIVLDIDEERRRISLGLKQCKINPWQEFSETHKKGIHVSGKIKSITDFGIFIGLKGGIDGLVHLSDISWKISGEEAVKNYKKGDEISAVVLQVDAERERISLGIKQLEEDPFNVYVSNHKKGAIITGIIKDFDKKTVTVKLSDGVEGNIKFSDSSRVNSEEIIKKLKIDDTILVKISNFDRKNRIINLTFHILDENNNKKDLKNKINVKSNDESFSNVMAEAFKAAQNTE.

S1 motif domains are found at residues G21–E87, S105–R171, G192–K260, G277–K347, G364–K434, and G451–H520.

The protein belongs to the bacterial ribosomal protein bS1 family.

In terms of biological role, binds mRNA; thus facilitating recognition of the initiation point. It is needed to translate mRNA with a short Shine-Dalgarno (SD) purine-rich sequence. The chain is Small ribosomal subunit protein bS1 (rpsA) from Buchnera aphidicola subsp. Schizaphis graminum (strain Sg).